Reading from the N-terminus, the 1108-residue chain is Unconventional myosin-Ie (1108 aa).

A Myosin motor domain is found at 19–692 (SGVDDMVLLS…SLFLLEEMRE (674 aa)). 112–119 (GESGAGKT) is an ATP binding site. Residues 581–591 (PHYIRCIKPNE) form an actin-binding region. Positions 695 to 724 (YDGYARVIQKSWRKFVARKKYVQMREEASD) constitute an IQ domain. Residues 730-922 (KERRRNSINR…NKVLQVSIGP (193 aa)) enclose the TH1 domain. The tract at residues 919–966 (SIGPGLPKNSRPTRRNTTQNTGYSSGTQNANYPVRAAPPPPGYHQNGV) is disordered. Residues 933–949 (RNTTQNTGYSSGTQNAN) show a composition bias toward polar residues. Phosphoserine is present on residues S980 and S1002. The interval 993–1053 (ARPPLPRQQS…KPQPKPKPQV (61 aa)) is disordered. Positions 999–1013 (RQQSTSSDRVSQTPE) are enriched in polar residues. Pro residues predominate over residues 1035–1052 (RPPPAGGRPKPQPKPKPQ). In terms of domain architecture, SH3 spans 1051-1108 (PQVPQCKALYAYDAQDTDELSFNANDIIDIIKEDPSGWWTGRLRGKQGLFPNNYVTKI).

The protein belongs to the TRAFAC class myosin-kinesin ATPase superfamily. Myosin family. Interacts with CALM and F-actin. Interacts (via SH3 domain) with SYNJ1, DNM1 and DNM2. Interacts with ARL14EP. Interacts with CARMIL1. Expressed in the immune system. In the kidney, predominantly expressed in the glomerulus, including podocytes.

The protein localises to the cytoplasm. The protein resides in the cytoskeleton. It localises to the cytoplasmic vesicle. Its subcellular location is the clathrin-coated vesicle. It is found in the cell junction. In terms of biological role, actin-based motor molecule with ATPase activity. Unconventional myosins serve in intracellular movements. Their highly divergent tails bind to membranous compartments, which are then moved relative to actin filaments. Binds to membranes containing anionic phospholipids via its tail domain. Involved in clathrin-mediated endocytosis and intracellular movement of clathrin-coated vesicles. Required for normal morphology of the glomerular basement membrane, normal development of foot processes by kidney podocytes and normal kidney function. In dendritic cells, may control the movement of class II-containing cytoplasmic vesicles along the actin cytoskeleton by connecting them with the actin network via ARL14EP and ARL14. The polypeptide is Unconventional myosin-Ie (MYO1E) (Homo sapiens (Human)).